Consider the following 354-residue polypeptide: Histidinol-phosphate aminotransferase (354 aa).

At Lys-210 the chain carries N6-(pyridoxal phosphate)lysine.

This sequence belongs to the class-II pyridoxal-phosphate-dependent aminotransferase family. Histidinol-phosphate aminotransferase subfamily. As to quaternary structure, homodimer. Pyridoxal 5'-phosphate is required as a cofactor.

It carries out the reaction L-histidinol phosphate + 2-oxoglutarate = 3-(imidazol-4-yl)-2-oxopropyl phosphate + L-glutamate. The protein operates within amino-acid biosynthesis; L-histidine biosynthesis; L-histidine from 5-phospho-alpha-D-ribose 1-diphosphate: step 7/9. This chain is Histidinol-phosphate aminotransferase, found in Clostridium botulinum (strain ATCC 19397 / Type A).